The primary structure comprises 114 residues: Putative membrane protein insertion efficiency factor (114 aa).

It belongs to the UPF0161 family.

The protein resides in the cell inner membrane. Could be involved in insertion of integral membrane proteins into the membrane. This Wolinella succinogenes (strain ATCC 29543 / DSM 1740 / CCUG 13145 / JCM 31913 / LMG 7466 / NCTC 11488 / FDC 602W) (Vibrio succinogenes) protein is Putative membrane protein insertion efficiency factor.